The sequence spans 306 residues: uncharacterized protein (306 aa).

A glycan (N-linked (GlcNAc...) asparagine) is linked at asparagine 208. 2 helical membrane-spanning segments follow: residues 218-238 (VFEI…VLFY) and 284-304 (VMLV…KITK).

It is found in the membrane. This is an uncharacterized protein from Encephalitozoon cuniculi (strain GB-M1) (Microsporidian parasite).